Reading from the N-terminus, the 143-residue chain is Transcriptional regulator MraZ (143 aa).

SpoVT-AbrB domains follow at residues 5–47 (EYDH…TLDE) and 76–119 (AVEV…DRET).

The protein belongs to the MraZ family. In terms of assembly, forms oligomers.

It localises to the cytoplasm. The protein resides in the nucleoid. The polypeptide is Transcriptional regulator MraZ (Staphylococcus aureus (strain Mu3 / ATCC 700698)).